The primary structure comprises 430 residues: Transcriptional regulatory protein RXT2 (430 aa).

The segment at 408–430 (EIENTMEDGVVDDNEPDEEANRA) is disordered.

Belongs to the RXT2 family. As to quaternary structure, component of the RPD3C(L) complex composed of at least ASH1, CTI6, DEP1, PHO23, RPD3, RXT2, RXT3, SAP30, SDS3, SIN3, UME1 and UME6.

Its subcellular location is the nucleus. Component of the RPD3C(L) histone deacetylase complex (HDAC) responsible for the deacetylation of lysine residues on the N-terminal part of the core histones (H2A, H2B, H3 and H4). Histone deacetylation gives a tag for epigenetic repression and plays an important role in transcriptional regulation, cell cycle progression and developmental events. The chain is Transcriptional regulatory protein RXT2 (RXT2) from Saccharomyces cerevisiae (strain ATCC 204508 / S288c) (Baker's yeast).